The chain runs to 305 residues: Coiled-coil domain-containing protein 69-A (305 aa).

The N-myristoyl glycine moiety is linked to residue glycine 2. The interval 13 to 38 is disordered; that stretch reads LRKKKRQKAHQGGLTSQELNDLNAKT. Polar residues predominate over residues 25–38; sequence GLTSQELNDLNAKT. The stretch at 42–281 forms a coiled coil; that stretch reads NEVLQKIKEY…QREKEQNLYR (240 aa).

Belongs to the CCDC69 family.

It is found in the cytoplasm. It localises to the cytoskeleton. The protein localises to the spindle. The protein resides in the midbody. In terms of biological role, may act as a scaffold to regulate the recruitment and assembly of spindle midzone components. This Xenopus laevis (African clawed frog) protein is Coiled-coil domain-containing protein 69-A (ccdc69-a).